The following is a 673-amino-acid chain: Paralemmin-3 (673 aa).

2 coiled-coil regions span residues 4-49 (SSLY…LRER) and 75-101 (GQAQARIRNLEDSLFTLQSQLQLLQSA). 2 disordered regions span residues 49–78 (RWLMDGAAAVPEPSEDPTSKDPQSPEGQAQ) and 99–213 (QSAS…GEAK). Residues 123–137 (LSQSIVEAGSVGQTD) are compositionally biased toward polar residues. 2 positions are modified to phosphoserine: S124 and S143. T151 is modified (phosphothreonine). Phosphoserine is present on residues S155, S157, and S260. Disordered regions lie at residues 295 to 343 (VPEV…SFIW) and 356 to 673 (LLVE…CAVM). Residue T301 is modified to Phosphothreonine. S325 carries the phosphoserine modification. Over residues 327–338 (EGDGQGGSGGEE) the composition is skewed to gly residues. 2 positions are modified to phosphoserine: S375 and S420. Composition is skewed to basic and acidic residues over residues 392–477 (EAEK…KRGA) and 487–532 (GVEK…EKTQ). Phosphoserine occurs at positions 544 and 660. S-palmitoyl cysteine attachment occurs at residues C667 and C669. Position 670 is a cysteine methyl ester (C670). C670 carries the S-farnesyl cysteine lipid modification. The propeptide at 671 to 673 (AVM) is removed in mature form.

Belongs to the paralemmin family. As to quaternary structure, interacts with SIGIRR. In terms of processing, palmitoylated on Cys-667 and Cys-669 and prenylated on Cys-670; which is required for membrane association.

The protein localises to the cytoplasm. It localises to the cell membrane. ATP-binding protein, which may act as a adapter in the Toll-like receptor (TLR) signaling. This chain is Paralemmin-3 (PALM3), found in Homo sapiens (Human).